The chain runs to 369 residues: Small ribosomal subunit biogenesis GTPase RsgA (369 aa).

A CP-type G domain is found at 116–271 (GEQLIAANLD…LIDNPGIREI (156 aa)). Residues 161 to 164 (NKID) and 213 to 221 (GSSGVGKST) contribute to the GTP site. Residues Cys-294, Cys-299, His-301, and Cys-307 each contribute to the Zn(2+) site.

It belongs to the TRAFAC class YlqF/YawG GTPase family. RsgA subfamily. In terms of assembly, monomer. Associates with 30S ribosomal subunit, binds 16S rRNA. Zn(2+) serves as cofactor.

The protein localises to the cytoplasm. Functionally, one of several proteins that assist in the late maturation steps of the functional core of the 30S ribosomal subunit. Helps release RbfA from mature subunits. May play a role in the assembly of ribosomal proteins into the subunit. Circularly permuted GTPase that catalyzes slow GTP hydrolysis, GTPase activity is stimulated by the 30S ribosomal subunit. The polypeptide is Small ribosomal subunit biogenesis GTPase RsgA (Methanosarcina acetivorans (strain ATCC 35395 / DSM 2834 / JCM 12185 / C2A)).